Here is a 929-residue protein sequence, read N- to C-terminus: Dual specificity protein phosphatase PHS1 (929 aa).

Disordered regions lie at residues 1 to 27 and 545 to 618; these read MAEP…LVHD and PESP…SLSS. Basic and acidic residues-rich tracts occupy residues 552–580 and 591–606; these read HGHE…ESDM and ENKE…ESWH. The Tyrosine-protein phosphatase domain occupies 703–848; sequence KPSMIQENLF…LINLDKKCHG (146 aa). Cys-792 (phosphocysteine intermediate) is an active-site residue. 792–798 is a binding site for substrate; the sequence is CFEGRSR. A Nuclear export signal motif is present at residues 903–911; sequence QKALEALKL.

In terms of assembly, interacts with MPK18. In terms of tissue distribution, expressed in roots, leaves and flowers.

Its subcellular location is the cytoplasm. It catalyses the reaction O-phospho-L-seryl-[protein] + H2O = L-seryl-[protein] + phosphate. It carries out the reaction O-phospho-L-threonyl-[protein] + H2O = L-threonyl-[protein] + phosphate. The catalysed reaction is O-phospho-L-tyrosyl-[protein] + H2O = L-tyrosyl-[protein] + phosphate. In terms of biological role, probable dual specificity phosphatase that binds and dephosphorylates MPK18, modulating the organization and dynamics of cortical microtubules. Acts as a negative regulator of abscisic acid (ABA) signaling during seed germination and light-induced stomata aperture. The polypeptide is Dual specificity protein phosphatase PHS1 (PHS1) (Arabidopsis thaliana (Mouse-ear cress)).